Consider the following 253-residue polypeptide: Ubiquinone/menaquinone biosynthesis C-methyltransferase UbiE (253 aa).

S-adenosyl-L-methionine contacts are provided by residues Thr76, Asp97, 125–126 (NA), and Ser142.

Belongs to the class I-like SAM-binding methyltransferase superfamily. MenG/UbiE family.

The catalysed reaction is a 2-demethylmenaquinol + S-adenosyl-L-methionine = a menaquinol + S-adenosyl-L-homocysteine + H(+). The enzyme catalyses a 2-methoxy-6-(all-trans-polyprenyl)benzene-1,4-diol + S-adenosyl-L-methionine = a 5-methoxy-2-methyl-3-(all-trans-polyprenyl)benzene-1,4-diol + S-adenosyl-L-homocysteine + H(+). It functions in the pathway quinol/quinone metabolism; menaquinone biosynthesis; menaquinol from 1,4-dihydroxy-2-naphthoate: step 2/2. It participates in cofactor biosynthesis; ubiquinone biosynthesis. Its function is as follows. Methyltransferase required for the conversion of demethylmenaquinol (DMKH2) to menaquinol (MKH2) and the conversion of 2-polyprenyl-6-methoxy-1,4-benzoquinol (DDMQH2) to 2-polyprenyl-3-methyl-6-methoxy-1,4-benzoquinol (DMQH2). In Xanthomonas axonopodis pv. citri (strain 306), this protein is Ubiquinone/menaquinone biosynthesis C-methyltransferase UbiE.